The primary structure comprises 454 residues: Guanine deaminase (454 aa).

The Zn(2+) site is built by H82 and H84. Residues 84-87, 213-214, 240-243, and D330 each bind substrate; these read HAPQ, RF, and HISE. H240 and D330 together coordinate Zn(2+). At S453 the chain carries Phosphoserine.

The protein belongs to the metallo-dependent hydrolases superfamily. ATZ/TRZ family. Homodimer. It depends on Zn(2+) as a cofactor.

The enzyme catalyses guanine + H2O + H(+) = xanthine + NH4(+). It participates in purine metabolism; guanine degradation; xanthine from guanine: step 1/1. In terms of biological role, catalyzes the hydrolytic deamination of guanine, producing xanthine and ammonia. In Mus musculus (Mouse), this protein is Guanine deaminase.